Reading from the N-terminus, the 104-residue chain is UPF0145 protein DET1617 (104 aa).

This sequence belongs to the UPF0145 family.

This Dehalococcoides mccartyi (strain ATCC BAA-2266 / KCTC 15142 / 195) (Dehalococcoides ethenogenes (strain 195)) protein is UPF0145 protein DET1617.